The sequence spans 288 residues: Acetyl-coenzyme A carboxylase carboxyl transferase subunit beta (288 aa).

Positions 32–288 constitute a CoA carboxyltransferase N-terminal domain; the sequence is LFAKCPACKH…LELHTEVENV (257 aa). Residues Cys-36, Cys-39, Cys-54, and Cys-57 each coordinate Zn(2+). The C4-type zinc-finger motif lies at 36 to 57; sequence CPACKHTIYQKDLGKNKVCPNC.

It belongs to the AccD/PCCB family. Acetyl-CoA carboxylase is a heterohexamer composed of biotin carboxyl carrier protein (AccB), biotin carboxylase (AccC) and two subunits each of ACCase subunit alpha (AccA) and ACCase subunit beta (AccD). Zn(2+) is required as a cofactor.

The protein localises to the cytoplasm. The catalysed reaction is N(6)-carboxybiotinyl-L-lysyl-[protein] + acetyl-CoA = N(6)-biotinyl-L-lysyl-[protein] + malonyl-CoA. The protein operates within lipid metabolism; malonyl-CoA biosynthesis; malonyl-CoA from acetyl-CoA: step 1/1. Functionally, component of the acetyl coenzyme A carboxylase (ACC) complex. Biotin carboxylase (BC) catalyzes the carboxylation of biotin on its carrier protein (BCCP) and then the CO(2) group is transferred by the transcarboxylase to acetyl-CoA to form malonyl-CoA. The protein is Acetyl-coenzyme A carboxylase carboxyl transferase subunit beta of Lactococcus lactis subsp. cremoris (strain SK11).